The primary structure comprises 304 residues: MTKVSVVGAAGTVGAAAGYNIALRDIADEVVFVDIPDKEDDTVGQAADTNHGIAYDSNTRVRQGGYEDTAGSDVVVITAGIPRQPGQTRIDLAGDNAPIMEDIQSSLDEHNDDYISLTTSNPVDLLNRHLYEAGDRSREQVIGFGGRLDSARFRYVLSEEFDAPVQNVEGTILGEHGDAQVPVFSKVRVDGTDPEFSGDEKEQLLGDLQESAMDVIERKGATEWGPARGVAHMVEAILHDTGEVLPASVKLEGEFGHEDTAFGVPVRLGSNGVEEIVEWDLDDYEQDLMADAAEKLSDQYDKIS.

NAD(+)-binding positions include 8–14 (GAAGTVG) and Asp34. Residues Arg83 and Arg89 each coordinate substrate. Residues Asn96 and 119 to 121 (TSN) contribute to the NAD(+) site. Residues Asn121 and Arg152 each contribute to the substrate site. His176 acts as the Proton acceptor in catalysis.

It belongs to the LDH/MDH superfamily. In terms of assembly, homotetramer; arranged as a dimer of dimers.

Its subcellular location is the cytoplasm. The catalysed reaction is (S)-malate + NAD(+) = oxaloacetate + NADH + H(+). Its function is as follows. Catalyzes the reversible oxidation of malate to oxaloacetate. This Haloarcula marismortui (strain ATCC 43049 / DSM 3752 / JCM 8966 / VKM B-1809) (Halobacterium marismortui) protein is Malate dehydrogenase (mdh).